A 506-amino-acid chain; its full sequence is Glutamate--tRNA ligase (506 aa).

Residues P24–G34 carry the 'HIGH' region motif. C121, C123, C148, and H150 together coordinate Zn(2+). The 'KMSKS' region signature appears at K266–R270. Residue K269 coordinates ATP.

It belongs to the class-I aminoacyl-tRNA synthetase family. Glutamate--tRNA ligase type 1 subfamily. As to quaternary structure, monomer. It depends on Zn(2+) as a cofactor.

It is found in the cytoplasm. It carries out the reaction tRNA(Glu) + L-glutamate + ATP = L-glutamyl-tRNA(Glu) + AMP + diphosphate. Its function is as follows. Catalyzes the attachment of glutamate to tRNA(Glu) in a two-step reaction: glutamate is first activated by ATP to form Glu-AMP and then transferred to the acceptor end of tRNA(Glu). This is Glutamate--tRNA ligase from Borrelia duttonii (strain Ly).